The chain runs to 265 residues: Cytochrome c oxidase subunit 3 (265 aa).

The next 7 membrane-spanning stretches (helical) occupy residues 16 to 36, 41 to 61, 85 to 105, 138 to 158, 162 to 182, 200 to 220, and 242 to 262; these read PWPLLGSLGALASTIGGVMYM, GGGTLLCLGLGMILYTMFVWW, GIILFIVSEVMFFLAFFWAFF, LILLSSGAAVTWAHHAILAGL, AVYALIATVFLALVFTGFQGI, FFLATGFHGFHVIIGTIFLII, and AFYWHFVDVVWLFLFVSIYWW.

Belongs to the cytochrome c oxidase subunit 3 family. As to quaternary structure, component of the cytochrome c oxidase (complex IV, CIV), a multisubunit enzyme composed of a catalytic core of 3 subunits and several supernumerary subunits. The complex exists as a monomer or a dimer and forms supercomplexes (SCs) in the inner mitochondrial membrane with ubiquinol-cytochrome c oxidoreductase (cytochrome b-c1 complex, complex III, CIII).

It localises to the mitochondrion inner membrane. It catalyses the reaction 4 Fe(II)-[cytochrome c] + O2 + 8 H(+)(in) = 4 Fe(III)-[cytochrome c] + 2 H2O + 4 H(+)(out). Component of the cytochrome c oxidase, the last enzyme in the mitochondrial electron transport chain which drives oxidative phosphorylation. The respiratory chain contains 3 multisubunit complexes succinate dehydrogenase (complex II, CII), ubiquinol-cytochrome c oxidoreductase (cytochrome b-c1 complex, complex III, CIII) and cytochrome c oxidase (complex IV, CIV), that cooperate to transfer electrons derived from NADH and succinate to molecular oxygen, creating an electrochemical gradient over the inner membrane that drives transmembrane transport and the ATP synthase. Cytochrome c oxidase is the component of the respiratory chain that catalyzes the reduction of oxygen to water. Electrons originating from reduced cytochrome c in the intermembrane space (IMS) are transferred via the dinuclear copper A center (CU(A)) of subunit 2 and heme A of subunit 1 to the active site in subunit 1, a binuclear center (BNC) formed by heme A3 and copper B (CU(B)). The BNC reduces molecular oxygen to 2 water molecules using 4 electrons from cytochrome c in the IMS and 4 protons from the mitochondrial matrix. The polypeptide is Cytochrome c oxidase subunit 3 (COX3) (Marchantia polymorpha (Common liverwort)).